The following is a 272-amino-acid chain: Methyl-CpG-binding domain-containing protein 2 (272 aa).

Over residues 1–15 (MSMSQSRAVQRSSSP) the composition is skewed to polar residues. The segment at 1–24 (MSMSQSRAVQRSSSPNEDRGENQL) is disordered. A CW-type zinc finger spans residues 53–112 (CPSIGAFTVQCASCFKWRLMPSMQKYEEIREQLLENPFFCDTAREWKPDISCDVPADIYQ). Positions 62–104 (QCASCFKWRLMPSMQKYEEIREQLLENPFFCDTAREWKPDISC) match the MBD-associated domain (MAD) motif. Zn(2+)-binding residues include C63, C66, C92, and C104. The region spanning 118–192 (WAIDKPNISR…SQFSFQIPKP (75 aa)) is the MBD domain. The segment covering 236-250 (LGTPTESGLNNSHYQ) has biased composition (polar residues). The interval 236–272 (LGTPTESGLNNSHYQPSKKKKTSTLSIFGSNDELADR) is disordered.

Interacts (via MBD domain) with DDM1. As to expression, expressed in buds, flowers, stems, siliques and mature seeds.

Its subcellular location is the nucleus. Probable transcriptional regulator. The sequence is that of Methyl-CpG-binding domain-containing protein 2 (MBD2) from Arabidopsis thaliana (Mouse-ear cress).